Consider the following 314-residue polypeptide: Formimidoylglutamase (314 aa).

Residues His127, Asp153, His155, Asp157, Asp245, and Asp247 each coordinate Mn(2+).

The protein belongs to the arginase family. Requires Mn(2+) as cofactor.

It catalyses the reaction N-formimidoyl-L-glutamate + H2O = formamide + L-glutamate. Its pathway is amino-acid degradation; L-histidine degradation into L-glutamate; L-glutamate from N-formimidoyl-L-glutamate (hydrolase route): step 1/1. In terms of biological role, catalyzes the conversion of N-formimidoyl-L-glutamate to L-glutamate and formamide. This is Formimidoylglutamase from Aeromonas salmonicida (strain A449).